Consider the following 580-residue polypeptide: 2-succinyl-5-enolpyruvyl-6-hydroxy-3-cyclohexene-1-carboxylate synthase (580 aa).

It belongs to the TPP enzyme family. MenD subfamily. In terms of assembly, homodimer. The cofactor is Mg(2+). Requires Mn(2+) as cofactor. It depends on thiamine diphosphate as a cofactor.

The enzyme catalyses isochorismate + 2-oxoglutarate + H(+) = 5-enolpyruvoyl-6-hydroxy-2-succinyl-cyclohex-3-ene-1-carboxylate + CO2. Its pathway is quinol/quinone metabolism; 1,4-dihydroxy-2-naphthoate biosynthesis; 1,4-dihydroxy-2-naphthoate from chorismate: step 2/7. The protein operates within quinol/quinone metabolism; menaquinone biosynthesis. In terms of biological role, catalyzes the thiamine diphosphate-dependent decarboxylation of 2-oxoglutarate and the subsequent addition of the resulting succinic semialdehyde-thiamine pyrophosphate anion to isochorismate to yield 2-succinyl-5-enolpyruvyl-6-hydroxy-3-cyclohexene-1-carboxylate (SEPHCHC). This Bacillus pumilus (strain SAFR-032) protein is 2-succinyl-5-enolpyruvyl-6-hydroxy-3-cyclohexene-1-carboxylate synthase.